We begin with the raw amino-acid sequence, 129 residues long: Large ribosomal subunit protein bL12c (129 aa).

The span at 101 to 123 shows a compositional bias: basic and acidic residues; it reads KPIKEGMSKADAEAGKKQLEEAG. Residues 101 to 129 are disordered; that stretch reads KPIKEGMSKADAEAGKKQLEEAGAKATLK.

It belongs to the bacterial ribosomal protein bL12 family. Homodimer. Part of the ribosomal stalk of the 50S ribosomal subunit. Forms a multimeric L10(L12)X complex, where L10 forms an elongated spine to which 2 to 4 L12 dimers bind in a sequential fashion. Binds GTP-bound translation factors.

It localises to the plastid. It is found in the chloroplast. Its function is as follows. Forms part of the ribosomal stalk which helps the ribosome interact with GTP-bound translation factors. Is thus essential for accurate translation. The protein is Large ribosomal subunit protein bL12c of Guillardia theta (Cryptophyte).